Consider the following 561-residue polypeptide: Trehalose-6-phosphate hydrolase (561 aa).

Asp203 serves as the catalytic Nucleophile. The Proton donor role is filled by Glu254.

This sequence belongs to the glycosyl hydrolase 13 family.

Its subcellular location is the cytoplasm. The catalysed reaction is alpha,alpha-trehalose 6-phosphate + H2O = D-glucose 6-phosphate + D-glucose. With respect to regulation, activity is stimulated by high salt concentrations with different efficiencies depending on the kind of salt. In vitro, inhibited by glucose. Functionally, hydrolyzes trehalose-6-phosphate to glucose and glucose 6-phosphate. Can also very effectively hydrolyze p-nitrophenyl-alpha-D-glucopyranoside, but not lactose, maltose, sucrose or sucrose-6-phosphate. Trehalose is also hydrolyzed, but to a much smaller extent than trehalose-6-phosphate. This is Trehalose-6-phosphate hydrolase from Bacillus subtilis (strain 168).